A 350-amino-acid chain; its full sequence is Phenylalanine--tRNA ligase alpha subunit (350 aa).

Glutamate 259 is a binding site for Mg(2+).

It belongs to the class-II aminoacyl-tRNA synthetase family. Phe-tRNA synthetase alpha subunit type 1 subfamily. Tetramer of two alpha and two beta subunits. The cofactor is Mg(2+).

The protein localises to the cytoplasm. It carries out the reaction tRNA(Phe) + L-phenylalanine + ATP = L-phenylalanyl-tRNA(Phe) + AMP + diphosphate + H(+). The sequence is that of Phenylalanine--tRNA ligase alpha subunit (pheS) from Rickettsia prowazekii (strain Madrid E).